The following is a 622-amino-acid chain: 1-deoxy-D-xylulose-5-phosphate synthase (622 aa).

Thiamine diphosphate contacts are provided by residues His71 and 112 to 114; that span reads GHS. Asp143 is a binding site for Mg(2+). Thiamine diphosphate-binding positions include 144–145, Asn172, Tyr283, and Glu363; that span reads GA. Residue Asn172 participates in Mg(2+) binding.

This sequence belongs to the transketolase family. DXPS subfamily. As to quaternary structure, homodimer. Mg(2+) serves as cofactor. Requires thiamine diphosphate as cofactor.

It catalyses the reaction D-glyceraldehyde 3-phosphate + pyruvate + H(+) = 1-deoxy-D-xylulose 5-phosphate + CO2. Its pathway is metabolic intermediate biosynthesis; 1-deoxy-D-xylulose 5-phosphate biosynthesis; 1-deoxy-D-xylulose 5-phosphate from D-glyceraldehyde 3-phosphate and pyruvate: step 1/1. Its function is as follows. Catalyzes the acyloin condensation reaction between C atoms 2 and 3 of pyruvate and glyceraldehyde 3-phosphate to yield 1-deoxy-D-xylulose-5-phosphate (DXP). This chain is 1-deoxy-D-xylulose-5-phosphate synthase, found in Caldanaerobacter subterraneus subsp. tengcongensis (strain DSM 15242 / JCM 11007 / NBRC 100824 / MB4) (Thermoanaerobacter tengcongensis).